The chain runs to 320 residues: ATP-dependent 6-phosphofructokinase (320 aa).

Gly-12 serves as a coordination point for ATP. 22 to 26 (RGVVR) is an ADP binding site. ATP is bound by residues 73–74 (RF) and 103–106 (GDGS). Asp-104 serves as a coordination point for Mg(2+). Substrate is bound at residue 126 to 128 (TID). The active-site Proton acceptor is the Asp-128. Residue Arg-155 coordinates ADP. Substrate-binding positions include Arg-163 and 170–172 (MGR). ADP is bound by residues 186–188 (GCE), Lys-212, and 214–216 (KKH). Substrate contacts are provided by residues Glu-223, Arg-244, and 250 to 253 (HIQR).

The protein belongs to the phosphofructokinase type A (PFKA) family. ATP-dependent PFK group I subfamily. Prokaryotic clade 'B1' sub-subfamily. In terms of assembly, homotetramer. Mg(2+) serves as cofactor.

Its subcellular location is the cytoplasm. It catalyses the reaction beta-D-fructose 6-phosphate + ATP = beta-D-fructose 1,6-bisphosphate + ADP + H(+). It participates in carbohydrate degradation; glycolysis; D-glyceraldehyde 3-phosphate and glycerone phosphate from D-glucose: step 3/4. Its activity is regulated as follows. Allosterically activated by ADP and other diphosphonucleosides, and allosterically inhibited by phosphoenolpyruvate. Its function is as follows. Catalyzes the phosphorylation of D-fructose 6-phosphate to fructose 1,6-bisphosphate by ATP, the first committing step of glycolysis. The sequence is that of ATP-dependent 6-phosphofructokinase from Aliivibrio fischeri (strain ATCC 700601 / ES114) (Vibrio fischeri).